The chain runs to 262 residues: MTSRYKLTLSYDGHDFHGFQSQPGQRTIQGTVEEILKQMTKGQEVRVFGSGRTDAGVHSVGQVIHFDYPGREIPAANMIKALNSQLPMDMVFTDCEIVDKDFHSRFSVKGKWYRYRVSLDGFVNPFKRFYTGHYPYPVDVEKMQEAAKDLLGRHDFTSFAASGGQIEDKVRDMYYVNVALDEENNEVIMDFIATGFLYNMVRILVATLLEIGNGRRPVHDLKRVIAAKNRLEVQQTAQACGLYLYHVFYEEVPRKYRLDLDL.

The Nucleophile role is filled by Asp54. Position 113 (Tyr113) interacts with substrate.

It belongs to the tRNA pseudouridine synthase TruA family. Homodimer.

It catalyses the reaction uridine(38/39/40) in tRNA = pseudouridine(38/39/40) in tRNA. Its function is as follows. Formation of pseudouridine at positions 38, 39 and 40 in the anticodon stem and loop of transfer RNAs. The polypeptide is tRNA pseudouridine synthase A (Lactobacillus delbrueckii subsp. bulgaricus (strain ATCC BAA-365 / Lb-18)).